The primary structure comprises 543 residues: Heparanase-like protein 1 (543 aa).

An N-terminal signal peptide occupies residues 1–24 (MGFRVCVIVVFLGCLLLVPEKTMA). Asn184 carries an N-linked (GlcNAc...) asparagine glycan. The active-site Proton donor is Glu201. N-linked (GlcNAc...) asparagine glycosylation occurs at Asn304. Glu320 functions as the Nucleophile in the catalytic mechanism. N-linked (GlcNAc...) asparagine glycosylation is found at Asn425 and Asn428.

The protein belongs to the glycosyl hydrolase 79 family.

It localises to the lysosome membrane. Its subcellular location is the secreted. Functionally, endoglycosidase which is a cell surface and extracellular matrix-degrading enzyme. Cleaves heparan sulfate proteoglycans (HSPGs) into heparan sulfate side chains and core proteoglycans. This Arabidopsis thaliana (Mouse-ear cress) protein is Heparanase-like protein 1.